Consider the following 173-residue polypeptide: Putative metal-dependent hydrolase BT9727_2476 (173 aa).

The Zn(2+) site is built by His65, His156, and His160.

The protein belongs to the metal hydrolase YfiT family. Homodimer. Zn(2+) is required as a cofactor.

Its subcellular location is the cytoplasm. Functionally, possible metal-dependent hydrolase. The chain is Putative metal-dependent hydrolase BT9727_2476 from Bacillus thuringiensis subsp. konkukian (strain 97-27).